The primary structure comprises 503 residues: Probable cytosol aminopeptidase (503 aa).

Residues lysine 270 and aspartate 275 each coordinate Mn(2+). Lysine 282 is a catalytic residue. Residues aspartate 293, aspartate 352, and glutamate 354 each coordinate Mn(2+). The active site involves arginine 356.

It belongs to the peptidase M17 family. Mn(2+) is required as a cofactor.

Its subcellular location is the cytoplasm. The catalysed reaction is Release of an N-terminal amino acid, Xaa-|-Yaa-, in which Xaa is preferably Leu, but may be other amino acids including Pro although not Arg or Lys, and Yaa may be Pro. Amino acid amides and methyl esters are also readily hydrolyzed, but rates on arylamides are exceedingly low.. It catalyses the reaction Release of an N-terminal amino acid, preferentially leucine, but not glutamic or aspartic acids.. In terms of biological role, presumably involved in the processing and regular turnover of intracellular proteins. Catalyzes the removal of unsubstituted N-terminal amino acids from various peptides. The sequence is that of Probable cytosol aminopeptidase from Citrobacter koseri (strain ATCC BAA-895 / CDC 4225-83 / SGSC4696).